The primary structure comprises 239 residues: MADS-box transcription factor 34 (239 aa).

The MADS-box domain maps to 1-61; the sequence is MGRGKVVLQR…GRLYQFSSSS (61 aa). The region spanning 88–178 is the K-box domain; the sequence is MQNNYQEYVN…KRKLDEIDVE (91 aa). A disordered region spans residues 179 to 208; the sequence is AAPPQPPWNGNCSNGHGGGGGVFSSEPPQP.

In terms of tissue distribution, highly expressed in leaves and at low levels in roots and spikelets (rice flower).

The protein localises to the nucleus. Its function is as follows. Probable transcription factor. The sequence is that of MADS-box transcription factor 34 (MADS34) from Oryza sativa subsp. japonica (Rice).